A 696-amino-acid polypeptide reads, in one-letter code: MDTHGWGSRILVGAALAALTMLGACNGDETAERNQLPVFVSGSVRTTAYDGASDDLLTAGLGKTGLASAAAPAFADPSRPTAAELRRVAIWSNYRALVDMSANGGYGRFWGPNVDLDGNDTLGEGKIAGTEYLAYADDGSGRKNVTLLVQVPASFDPAQPCIVTATSSGSRGVYGAISAAGEWGLKRGCAVAYNDKGGGNGAQELGSNTVTLIDGTLANAVLAGSASLFTANLTSGDLAAFNSRFPNRYAFKHAHSQQNPEHDWGRATLQSVEFAYWALNQQFAPLVDGSHRGVRYRAGDITTIAASVSNGGGAALAAAEQDTRRWITAVVVGEPQINVRMAPNAVVRESGRPVPSFGRPLADYATLANLLEPCAAASASLAGEPYLSALPLATTQSIRTQRCATLAAAGLVSGADTQSQAADALAQLHAAGYLADSDLLQASMWDSQAIPAIAVTYANAYTRSSVADNLCNFSFATTNAATGAVAAPAASPMPAVFGLGNGVPPTAGINLVFNTGAGVDHRLATPDASFAGALCLRQLWTNGMLDMPANVEAVRVNANLQGKPAIIVQGRSDALVPVNHASRAYVAQNSISEGGRSQLVFYEVTNGQHFDAFLPVAGFDTRFVPVHYYNVQALNLMWRHLKSGAPLPPSQVIRTVPRGGTPGAAPALTSANLPPISTAPGANAIAAGAGAIDVPL.

The first 26 residues, Met1–Asn26, serve as a signal peptide directing secretion. The active-site Charge relay system is Ser309.

It belongs to the D-(-)-3-hydroxybutyrate oligomer hydrolase family.

The protein localises to the secreted. It catalyses the reaction (3R)-hydroxybutanoate dimer + H2O = 2 (R)-3-hydroxybutanoate + H(+). The protein operates within lipid metabolism; butanoate metabolism. Functionally, participates in the degradation of poly-3-hydroxybutyrate (PHB). It works downstream of poly(3-hydroxybutyrate) depolymerase, hydrolyzing D(-)-3-hydroxybutyrate oligomers of various length (3HB-oligomers) into 3HB-monomers. The polypeptide is D-(-)-3-hydroxybutyrate oligomer hydrolase (Burkholderia vietnamiensis (strain G4 / LMG 22486) (Burkholderia cepacia (strain R1808))).